The following is a 653-amino-acid chain: Protease 1 (653 aa).

Positions 1–20 (MKRICGSLLLLGLSISAALA) form a signal peptide, or 27. A propeptide spanning residues 21–205 (APASRPAAFD…RRLAAASGEK (185 aa)) is cleaved from the precursor. 3 disulfide bridges follow: Cys211–Cys421, Cys217–Cys285, and Cys241–Cys263. Active-site charge relay system residues include His262, Asp318, and Ser399. The region spanning 474–553 (NTPPVANFTS…TNTKTGSVTV (80 aa)) is the PKD domain. The propeptide at 474–653 (NTPPVANFTS…AAQRAPGSCG (180 aa)) is thr/Ser-rich. Positions 555–653 (GGPGAQTYTN…AAQRAPGSCG (99 aa)) constitute a P/Homo B domain.

The protein belongs to the peptidase S1 family. Three disulfide bonds are present.

The protein resides in the secreted. The catalysed reaction is Preferential cleavage: Lys-|-Xaa, including Lys-|-Pro.. The chain is Protease 1 from Achromobacter lyticus.